The primary structure comprises 316 residues: Acetaldehyde dehydrogenase (316 aa).

11-14 provides a ligand contact to NAD(+); sequence SGNI. Cys-131 functions as the Acyl-thioester intermediate in the catalytic mechanism. Residues 162-170 and Asn-289 contribute to the NAD(+) site; that span reads SAGPGTRAN.

Belongs to the acetaldehyde dehydrogenase family. In terms of assembly, interacts with MhpE.

It catalyses the reaction acetaldehyde + NAD(+) + CoA = acetyl-CoA + NADH + H(+). It participates in aromatic compound metabolism; 3-phenylpropanoate degradation. Functionally, catalyzes the conversion of acetaldehyde to acetyl-CoA, using NAD(+) and coenzyme A. Is the final enzyme in the meta-cleavage pathway for the degradation of aromatic compounds. This chain is Acetaldehyde dehydrogenase, found in Escherichia coli O7:K1 (strain IAI39 / ExPEC).